A 499-amino-acid polypeptide reads, in one-letter code: Putative sperm motility kinase W (499 aa).

Residues 14-262 (YKVLFTLGHG…IEDIERHPWV (249 aa)) enclose the Protein kinase domain. ATP is bound by residues 20–28 (LGHGSFGTV) and Lys43. Catalysis depends on Asp133, which acts as the Proton acceptor. One can recognise a UBA domain in the interval 274–314 (DPDYNIIEMLCGMGFDANEILESLQRKKYNESMGAYLILKA).

The protein belongs to the protein kinase superfamily. CAMK Ser/Thr protein kinase family. Smok subfamily.

The catalysed reaction is L-seryl-[protein] + ATP = O-phospho-L-seryl-[protein] + ADP + H(+). It carries out the reaction L-threonyl-[protein] + ATP = O-phospho-L-threonyl-[protein] + ADP + H(+). May play a role in sperm motility, especially in the regulation of flagellar function. This chain is Putative sperm motility kinase W, found in Mus musculus (Mouse).